We begin with the raw amino-acid sequence, 55 residues long: Large ribosomal subunit protein bL33 (55 aa).

The protein belongs to the bacterial ribosomal protein bL33 family.

This chain is Large ribosomal subunit protein bL33, found in Campylobacter fetus subsp. fetus (strain 82-40).